The sequence spans 325 residues: Replication factor C small subunit (325 aa).

ATP is bound at residue Gly45–Thr52.

The protein belongs to the activator 1 small subunits family. RfcS subfamily. As to quaternary structure, heteromultimer composed of small subunits (RfcS) and large subunits (RfcL).

Functionally, part of the RFC clamp loader complex which loads the PCNA sliding clamp onto DNA. The chain is Replication factor C small subunit from Sulfolobus acidocaldarius (strain ATCC 33909 / DSM 639 / JCM 8929 / NBRC 15157 / NCIMB 11770).